The primary structure comprises 828 residues: Transcription factor SOX-6 (828 aa).

The tract at residues 1–51 (MSSKQATSPFACAADGEDAMTQDLTSREKEEGSDQHVASHLPLHPIMHNKP) is disordered. Over residues 25–34 (TSREKEEGSD) the composition is skewed to basic and acidic residues. Thr-119 carries the phosphothreonine modification. Residues 184–262 (LAEKERQLST…LLQQQIQVQG (79 aa)) are a coiled coil. The interval 380–470 (SPGAKMPSTP…KSSIPSPIGG (91 aa)) is disordered. Over residues 393–402 (NTAGTVSPTG) the composition is skewed to polar residues. Ser-399 bears the Phosphoserine mark. Residue Thr-401 is modified to Phosphothreonine. Glycyl lysine isopeptide (Lys-Gly) (interchain with G-Cter in SUMO) cross-links involve residues Lys-404 and Lys-417. Residues Ser-439 and Ser-442 each carry the phosphoserine modification. Residues 439 to 461 (SPTSPTQNLFPASKTSPVNLPNK) show a composition bias toward polar residues. A DNA-binding region (HMG box) is located at residues 621–689 (IKRPMNAFMV…IHLEKYPNYK (69 aa)). Residues 753–781 (TPSPQMTSDCSSTSASPEPSLPVIQSTYG) are compositionally biased toward polar residues. A disordered region spans residues 753-828 (TPSPQMTSDC…NEAPEAVSAN (76 aa)). The span at 796-809 (NGEDEMEMYDDYED) shows a compositional bias: acidic residues.

As to quaternary structure, homodimer. Interacts with DAZAP2. May interact with CENPK. In terms of processing, sumoylation inhibits the transcriptional activity. Expressed in a wide variety of tissues, most abundantly in skeletal musclen.

The protein localises to the nucleus. It localises to the cytoplasm. Transcription factor that plays a key role in several developmental processes, including neurogenesis, chondrocytes differentiation and cartilage formation. Specifically binds the 5'-AACAAT-3' DNA motif present in enhancers and super-enhancers and promotes expression of genes important for chondrogenesis. Required for overt chondrogenesis when condensed prechondrocytes differentiate into early stage chondrocytes: SOX5 and SOX6 cooperatively bind with SOX9 on active enhancers and super-enhancers associated with cartilage-specific genes, and thereby potentiate SOX9's ability to transactivate. Not involved in precartilaginous condensation, the first step in chondrogenesis, during which skeletal progenitors differentiate into prechondrocytes. Together with SOX5, required to form and maintain a pool of highly proliferating chondroblasts between epiphyses and metaphyses, to form columnar chondroblasts, delay chondrocyte prehypertrophy but promote hypertrophy, and to delay terminal differentiation of chondrocytes on contact with ossification fronts. Binds to the proximal promoter region of the myelin protein MPZ gene, and is thereby involved in the differentiation of oligodendroglia in the developing spinal tube. Binds to the gene promoter of MBP and acts as a transcriptional repressor. In Homo sapiens (Human), this protein is Transcription factor SOX-6.